Here is a 90-residue protein sequence, read N- to C-terminus: DNA-binding protein HU-beta (90 aa).

It belongs to the bacterial histone-like protein family. In terms of assembly, heterodimer of an alpha and a beta chain.

Functionally, histone-like DNA-binding protein which is capable of wrapping DNA to stabilize it, and thus to prevent its denaturation under extreme environmental conditions. This chain is DNA-binding protein HU-beta (hupB), found in Pseudomonas aeruginosa (strain ATCC 15692 / DSM 22644 / CIP 104116 / JCM 14847 / LMG 12228 / 1C / PRS 101 / PAO1).